Reading from the N-terminus, the 370-residue chain is Probable endopolygalacturonase A (370 aa).

The N-terminal stretch at 1 to 19 is a signal peptide; sequence MPSAKPLFCLATLAGAALA. Residues 20–32 constitute a propeptide that is removed on maturation; sequence APAPSRATDFNKR. The cysteines at positions 35 and 50 are disulfide-linked. PbH1 repeat units lie at residues 162–192, 193–214, 215–235, 244–265, 273–295, and 307–352; these read SDNLVIEDVTIDNSDGDSEGGHNTDGFDISE, STYITITGATVKNQDDCVAINS, GENIYFSGGTCSGGHGLSIGS, VKNVTFIDSTVSDSENGVRIKT, VEDITYSNIQLSGISDYGIVIEQ, and SNGV…DITG. Residue D207 is the Proton donor of the active site. Cysteines 209 and 225 form a disulfide. The active site involves H229. An N-linked (GlcNAc...) asparagine glycan is attached at N246. Disulfide bonds link C335–C340 and C359–C368.

The protein belongs to the glycosyl hydrolase 28 family.

It localises to the secreted. It carries out the reaction (1,4-alpha-D-galacturonosyl)n+m + H2O = (1,4-alpha-D-galacturonosyl)n + (1,4-alpha-D-galacturonosyl)m.. In terms of biological role, involved in maceration and soft-rotting of plant tissue. Hydrolyzes the 1,4-alpha glycosidic bonds of de-esterified pectate in the smooth region of the plant cell wall. This chain is Probable endopolygalacturonase A (pgaA), found in Aspergillus kawachii (strain NBRC 4308) (White koji mold).